The primary structure comprises 99 residues: Signal recognition particle 19 kDa protein (99 aa).

Belongs to the SRP19 family. Part of the signal recognition particle protein translocation system, which is composed of SRP and FtsY. Archaeal SRP consists of a 7S RNA molecule of 300 nucleotides and two protein subunits: SRP54 and SRP19.

Its subcellular location is the cytoplasm. Functionally, involved in targeting and insertion of nascent membrane proteins into the cytoplasmic membrane. Binds directly to 7S RNA and mediates binding of the 54 kDa subunit of the SRP. The polypeptide is Signal recognition particle 19 kDa protein (Ignicoccus hospitalis (strain KIN4/I / DSM 18386 / JCM 14125)).